Reading from the N-terminus, the 137-residue chain is Probable histone H2AXa (137 aa).

Over residues Met1–Arg10 the composition is skewed to gly residues. The interval Met1 to Arg21 is disordered. Ser134 carries the post-translational modification Phosphoserine; by ATM and ATR. Positions Ser134–Gln135 match the [ST]-Q motif motif.

It belongs to the histone H2A family. In terms of assembly, the nucleosome is a histone octamer containing two molecules each of H2A, H2B, H3 and H4 assembled in one H3-H4 heterotetramer and two H2A-H2B heterodimers. The octamer wraps approximately 147 bp of DNA. Interacts with numerous proteins required for DNA damage signaling and repair when phosphorylated on Ser-134. In terms of processing, phosphorylated to form H2AXS139ph (gamma-H2AX) in response to DNA double strand breaks (DSBs) generated by exogenous genotoxic agents and by stalled replication forks, and may also occur during meiotic recombination events. Phosphorylation can extend up to several thousand nucleosomes from the actual site of the DSB and may mark the surrounding chromatin for recruitment of proteins required for DNA damage signaling and repair. Widespread phosphorylation may also serve to amplify the damage signal or aid repair of persistent lesions. H2AXS139ph in response to ionizing radiation is mediated by ATM while defects in DNA replication induce H2AXS139ph subsequent to activation of ATR. Dephosphorylation of H2AXS139ph by PP2A is required for DNA DSB repair.

Its subcellular location is the nucleus. It is found in the chromosome. Functionally, variant histone H2A which replaces conventional H2A in a subset of nucleosomes. Nucleosomes wrap and compact DNA into chromatin, limiting DNA accessibility to the cellular machineries which require DNA as a template. Histones thereby play a central role in transcription regulation, DNA repair, DNA replication and chromosomal stability. DNA accessibility is regulated via a complex set of post-translational modifications of histones, also called histone code, and nucleosome remodeling. Required for checkpoint-mediated arrest of cell cycle progression in response to low doses of ionizing radiation and for efficient repair of DNA double strand breaks (DSBs) specifically when modified by C-terminal phosphorylation. In Oryza sativa subsp. indica (Rice), this protein is Probable histone H2AXa.